A 229-amino-acid chain; its full sequence is MARLKVKVWGEYACFSRPEFKVERVSYPVPTPSAARGLLEAIFWKPEFRYEVRRIGVLRLGTPFALLRNEVGNRMGAKPFFVEDARQQRTSLVLKDVAYLVEADMVLRPHATDPLPKYLEQFERRLKKGQYHHTPYLGTREFPAYFSPPDGEVPDGGLNLDLGPMLFDLAFVEDPGRPELTFKRPGRGEVQGYALPLFFHARIREGWLEVPAEKYQELYRLEEGHAKGA.

It belongs to the CRISPR-associated protein Cas5 family. Subtype I-C/Dvulg subfamily. It depends on Does not require a metal cofactor. as a cofactor.

Its function is as follows. CRISPR (clustered regularly interspaced short palindromic repeat) is an adaptive immune system that provides protection against mobile genetic elements (viruses, transposable elements and conjugative plasmids). CRISPR clusters contain spacers, sequences complementary to antecedent mobile elements, and target invading nucleic acids. CRISPR clusters are transcribed and processed into CRISPR RNA (crRNA). This protein is a sequence-specific endonuclease that cleaves pre-crRNA into mature crRNA, possibly by an intramolecular attack of the 2'-hydroxyl group of G26 on the scissile phosphodiester, cutting the precursor 3' to G26 residue yielding 5'-hydroxyl and 2' and/or 3' ends lacking a hydroxyl group (perhaps a 2'/3' cyclic phosphodiester). Requires between 4 and 8 nt downstream of the cleavage site for both binding and cleavage of pre-crRNA. Substitution with dG at this position abolishes cleavage but not RNA binding. Does not cleave pre-crRNA associated with the M.succiniciproducens strain MBEL55E Cas5 protein (AC Q65TW5) CRISPR locus. This is CRISPR pre-crRNA endoribonuclease Cas5d from Thermus thermophilus (strain ATCC BAA-163 / DSM 7039 / HB27).